The chain runs to 551 residues: Membrane protein insertase YidC (551 aa).

The helical transmembrane segment at 6–26 (YFLWGALFISGYLLFLQWSQD) threads the bilayer. Residues 34-50 (SVAQSTQSQSETNSQMS) show a composition bias toward low complexity. The interval 34 to 68 (SVAQSTQSQSETNSQMSDDLPMATQSTTEANAEIP) is disordered. The segment covering 56–68 (ATQSTTEANAEIP) has biased composition (polar residues). Transmembrane regions (helical) follow at residues 340 to 360 (TVDY…LTLI), 363 to 383 (FVIN…AIFF), 433 to 453 (LGGC…YWVL), 464 to 484 (FFLW…PILM), and 509 to 529 (IMPV…VLYW).

This sequence belongs to the OXA1/ALB3/YidC family. Type 1 subfamily. Interacts with the Sec translocase complex via SecD. Specifically interacts with transmembrane segments of nascent integral membrane proteins during membrane integration.

Its subcellular location is the cell inner membrane. Required for the insertion and/or proper folding and/or complex formation of integral membrane proteins into the membrane. Involved in integration of membrane proteins that insert both dependently and independently of the Sec translocase complex, as well as at least some lipoproteins. Aids folding of multispanning membrane proteins. The chain is Membrane protein insertase YidC from Marinomonas sp. (strain MWYL1).